The primary structure comprises 324 residues: Succinylglutamate desuccinylase (324 aa).

Residues H53, E56, and H148 each contribute to the Zn(2+) site. The active site involves E211.

It belongs to the AspA/AstE family. Succinylglutamate desuccinylase subfamily. Zn(2+) serves as cofactor.

It carries out the reaction N-succinyl-L-glutamate + H2O = L-glutamate + succinate. It functions in the pathway amino-acid degradation; L-arginine degradation via AST pathway; L-glutamate and succinate from L-arginine: step 5/5. Functionally, transforms N(2)-succinylglutamate into succinate and glutamate. This Acinetobacter baumannii (strain SDF) protein is Succinylglutamate desuccinylase.